The chain runs to 437 residues: MKLWGGRFKNAESKLMEDFNSSLKFDKRLYKEDIKGSIAHVKMLSKCGILEGEEKLIIIDGLISILDDIENGVLKIEGDYEDIHSFIEINLINRVGDVGKKLHTGRSRNDQVAVDMRMYAKSITFEIIEYINELLEVITNLADSNDVIMPGYTHLQRAQVIKFKLHMMAYYSMFNRDKKRLLSDIEVMDESPLGCGALAGTTYNIDREFTARELGFKKCVDNFMDGVSDRDYLISLLSSFSLIMMHLSRLSEELILWSSKEFDFVKISDEFSTGSSIMPQKKNPDAAELIRGKTGRVYGSLMGLLTTMKGIPLAYNKDMQEDKEGFFDAVDTVKKSLKVMSGMLSTLELKKDNMYNAVKKGFLNATEAADYLVNKGMAFRDAHGVIGAIVLYCEENKKAIEDLPLEKLKTFCDLFDEDIYDFIEYSNSLKRGIKINI.

It belongs to the lyase 1 family. Argininosuccinate lyase subfamily.

It localises to the cytoplasm. It carries out the reaction 2-(N(omega)-L-arginino)succinate = fumarate + L-arginine. Its pathway is amino-acid biosynthesis; L-arginine biosynthesis; L-arginine from L-ornithine and carbamoyl phosphate: step 3/3. The polypeptide is Argininosuccinate lyase (Clostridium novyi (strain NT)).